The primary structure comprises 110 residues: ATP-dependent Clp protease adapter protein ClpS (110 aa).

It belongs to the ClpS family. Binds to the N-terminal domain of the chaperone ClpA.

Its function is as follows. Involved in the modulation of the specificity of the ClpAP-mediated ATP-dependent protein degradation. The sequence is that of ATP-dependent Clp protease adapter protein ClpS from Bartonella henselae (strain ATCC 49882 / DSM 28221 / CCUG 30454 / Houston 1) (Rochalimaea henselae).